We begin with the raw amino-acid sequence, 195 residues long: dITP/XTP pyrophosphatase (195 aa).

Position 8-13 (8-13 (TNNQGK)) interacts with substrate. Mg(2+)-binding residues include E39 and D68. Residue D68 is the Proton acceptor of the active site. Substrate contacts are provided by residues S69, 149–152 (FGYD), K172, and 177–178 (HR).

It belongs to the HAM1 NTPase family. Homodimer. Mg(2+) is required as a cofactor.

The catalysed reaction is XTP + H2O = XMP + diphosphate + H(+). It carries out the reaction dITP + H2O = dIMP + diphosphate + H(+). The enzyme catalyses ITP + H2O = IMP + diphosphate + H(+). In terms of biological role, pyrophosphatase that catalyzes the hydrolysis of nucleoside triphosphates to their monophosphate derivatives, with a high preference for the non-canonical purine nucleotides XTP (xanthosine triphosphate), dITP (deoxyinosine triphosphate) and ITP. Seems to function as a house-cleaning enzyme that removes non-canonical purine nucleotides from the nucleotide pool, thus preventing their incorporation into DNA/RNA and avoiding chromosomal lesions. In Staphylococcus epidermidis (strain ATCC 12228 / FDA PCI 1200), this protein is dITP/XTP pyrophosphatase.